The chain runs to 276 residues: Large ribosomal subunit protein uL2 (276 aa).

Residues 222–276 (GVAMNPIDHPLGGGEGRSSGGRHPVSPWGMPTKGYKTRDRKKASSKLIIKRRGQK) form a disordered region. Residues 259-276 (RDRKKASSKLIIKRRGQK) show a composition bias toward basic residues.

This sequence belongs to the universal ribosomal protein uL2 family. In terms of assembly, part of the 50S ribosomal subunit. Forms a bridge to the 30S subunit in the 70S ribosome.

In terms of biological role, one of the primary rRNA binding proteins. Required for association of the 30S and 50S subunits to form the 70S ribosome, for tRNA binding and peptide bond formation. It has been suggested to have peptidyltransferase activity; this is somewhat controversial. Makes several contacts with the 16S rRNA in the 70S ribosome. This is Large ribosomal subunit protein uL2 from Nitratidesulfovibrio vulgaris (strain ATCC 29579 / DSM 644 / CCUG 34227 / NCIMB 8303 / VKM B-1760 / Hildenborough) (Desulfovibrio vulgaris).